A 626-amino-acid polypeptide reads, in one-letter code: Kinesin-like protein Klp59C (626 aa).

Residues 1–183 (MDKLSIEQKI…VRSGTTNERI (183 aa)) form a globular region. Residues 68–155 (CSGGNAASAN…GKNEDPGNPN (88 aa)) form a disordered region. A compositionally biased stretch (polar residues) spans 72–96 (NAASANQTASISPRSMKQRIATGSL). Residues 101–112 (ATAPPRQQTAPP) are compositionally biased toward low complexity. Residues 113 to 150 (VREDEVVHQAERMRKERERRREAQARTRLDREQGKNED) show a composition bias toward basic and acidic residues. The stretch at 115–150 (EDEVVHQAERMRKERERRREAQARTRLDREQGKNED) forms a coiled coil. One can recognise a Kinesin motor domain in the interval 187 to 521 (QIMVCVRKRP…LRYADRVKEL (335 aa)). ATP is bound at residue 277–284 (GQTGSGKT). Residues 557–608 (ASSTSMPGGGNQAQQHTNTANDLNRSQKPTSKPTYPTSGQQLVQRKGSSQRE) form a disordered region.

It belongs to the TRAFAC class myosin-kinesin ATPase superfamily. Kinesin family. MCAK/KIF2 subfamily.

The protein resides in the chromosome. It is found in the centromere. Its subcellular location is the kinetochore. It localises to the cytoplasm. The protein localises to the cytoskeleton. The protein resides in the spindle pole. In terms of biological role, required during anaphase to drive sister chromatid separation to actively depolymerize kinetochore microtubules at their kinetochore-associated plus ends, thereby contributing to chromatid mobility through a 'Pac-man' mechanism. The protein is Kinesin-like protein Klp59C (Klp59C) of Drosophila melanogaster (Fruit fly).